The sequence spans 175 residues: Crossover junction endodeoxyribonuclease RuvC (175 aa).

Catalysis depends on residues aspartate 16, glutamate 76, and aspartate 148. Mg(2+)-binding residues include aspartate 16, glutamate 76, and aspartate 148.

This sequence belongs to the RuvC family. Homodimer which binds Holliday junction (HJ) DNA. The HJ becomes 2-fold symmetrical on binding to RuvC with unstacked arms; it has a different conformation from HJ DNA in complex with RuvA. In the full resolvosome a probable DNA-RuvA(4)-RuvB(12)-RuvC(2) complex forms which resolves the HJ. Mg(2+) is required as a cofactor.

It is found in the cytoplasm. The enzyme catalyses Endonucleolytic cleavage at a junction such as a reciprocal single-stranded crossover between two homologous DNA duplexes (Holliday junction).. Its function is as follows. The RuvA-RuvB-RuvC complex processes Holliday junction (HJ) DNA during genetic recombination and DNA repair. Endonuclease that resolves HJ intermediates. Cleaves cruciform DNA by making single-stranded nicks across the HJ at symmetrical positions within the homologous arms, yielding a 5'-phosphate and a 3'-hydroxyl group; requires a central core of homology in the junction. The consensus cleavage sequence is 5'-(A/T)TT(C/G)-3'. Cleavage occurs on the 3'-side of the TT dinucleotide at the point of strand exchange. HJ branch migration catalyzed by RuvA-RuvB allows RuvC to scan DNA until it finds its consensus sequence, where it cleaves and resolves the cruciform DNA. The protein is Crossover junction endodeoxyribonuclease RuvC of Bradyrhizobium sp. (strain ORS 278).